A 265-amino-acid polypeptide reads, in one-letter code: Exosome complex component Rrp4 (265 aa).

In terms of domain architecture, S1 motif spans 65–137 (GDNVIGKIVD…EVNNIDLTTK (73 aa)). The 59-residue stretch at 147–205 (KGGQIVKITPSRVPRVIGRGGSMINMIKKLTMTRIIVGQNGWIWVNGKNEALEKLAIEA) folds into the KH domain. Acidic residues predominate over residues 241 to 254 (EIPELEEEPQEETE). A disordered region spans residues 241–265 (EIPELEEEPQEETEVNNNDGETRRT).

The protein belongs to the RRP4 family. As to quaternary structure, component of the archaeal exosome complex. Forms a trimer of Rrp4 and/or Csl4 subunits. The trimer associates with a hexameric ring-like arrangement composed of 3 Rrp41-Rrp42 heterodimers.

The protein resides in the cytoplasm. Functionally, non-catalytic component of the exosome, which is a complex involved in RNA degradation. Increases the RNA binding and the efficiency of RNA degradation. Confers strong poly(A) specificity to the exosome. The sequence is that of Exosome complex component Rrp4 from Pyrococcus horikoshii (strain ATCC 700860 / DSM 12428 / JCM 9974 / NBRC 100139 / OT-3).